Consider the following 144-residue polypeptide: Transcription antitermination protein NusB (144 aa).

Belongs to the NusB family.

Involved in transcription antitermination. Required for transcription of ribosomal RNA (rRNA) genes. Binds specifically to the boxA antiterminator sequence of the ribosomal RNA (rrn) operons. This is Transcription antitermination protein NusB from Paraburkholderia phytofirmans (strain DSM 17436 / LMG 22146 / PsJN) (Burkholderia phytofirmans).